Reading from the N-terminus, the 407-residue chain is Aspartokinase (407 aa).

An ATP-binding site is contributed by 7 to 10 (KFGG). 25 to 30 (RVIEEV) is a substrate binding site. Position 41 (Ser41) interacts with ATP. Substrate-binding positions include 47 to 49 (TDE), Glu74, 125 to 126 (LD), 150 to 153 (RGGS), and Ser153. Residues 173–174 (TD) and 179–184 (FTTDPR) contribute to the ATP site. ACT domains follow at residues 264–338 (VTVV…LAKV) and 340–407 (IVGS…AVRS). Substrate is bound by residues 289-291 (NVD), Gln295, 351-352 (VA), 365-366 (EI), and 372-373 (SE).

It belongs to the aspartokinase family. In terms of assembly, tetramer consisting of 2 isoforms Alpha (catalytic and regulation) and of a homodimer of 2 isoforms Beta (regulation).

It carries out the reaction L-aspartate + ATP = 4-phospho-L-aspartate + ADP. Its pathway is amino-acid biosynthesis; L-lysine biosynthesis via DAP pathway; (S)-tetrahydrodipicolinate from L-aspartate: step 1/4. The protein operates within amino-acid biosynthesis; L-methionine biosynthesis via de novo pathway; L-homoserine from L-aspartate: step 1/3. It participates in amino-acid biosynthesis; L-threonine biosynthesis; L-threonine from L-aspartate: step 1/5. With respect to regulation, lysine-sensitive. Functionally, catalyzes the phosphorylation of the beta-carboxyl group of aspartic acid with ATP to yield 4-phospho-L-aspartate, which is involved in the branched biosynthetic pathway leading to the biosynthesis of amino acids threonine, isoleucine and methionine. This chain is Aspartokinase (lysC), found in Geobacillus stearothermophilus (Bacillus stearothermophilus).